The sequence spans 121 residues: Putative ferredoxin (121 aa).

This sequence to E.coli YkgJ.

The polypeptide is Putative ferredoxin (Acinetobacter calcoaceticus).